We begin with the raw amino-acid sequence, 756 residues long: Protein psiP (756 aa).

The N-terminal stretch at 1 to 23 is a signal peptide; sequence MFIQRTFLKVLTLLSIVTVLVHG. Topologically, residues 24-692 are extracellular; it reads QTQPKDKITL…NCNTGAVVST (669 aa). Asn82 carries N-linked (GlcNAc...) asparagine glycosylation. A PA14 domain is found at 126–281; sequence LNWNGEAYEY…VDYCGVCEGD (156 aa). Residues Asn359, Asn483, Asn564, and Asn663 are each glycosylated (N-linked (GlcNAc...) asparagine). The helical transmembrane segment at 693–713 threads the bilayer; it reads AVIAGSTVAGAVALGIFLYGG. Topologically, residues 714 to 756 are cytoplasmic; that stretch reads KKGYDYWKDSRNISMGSSNSNPLYEEQQTGRGVNPMYDDPAAN. Residues 730-744 show a composition bias toward polar residues; that stretch reads SSNSNPLYEEQQTGR. The tract at residues 730–756 is disordered; it reads SSNSNPLYEEQQTGRGVNPMYDDPAAN.

It belongs to the prespore-cell-inducing factor family.

Its subcellular location is the membrane. The protein is Protein psiP (psiP) of Dictyostelium discoideum (Social amoeba).